Consider the following 218-residue polypeptide: MAAQPQAPSAGGRPRAGKAVKSVARPAKLSRESIVEGALTFLDREGWDSLTINALATQLGTKGPSLYNHVDSLEDLRRAVRIRVIDDIITMLNRVGAGRARDDAVLVMAGAYRSYAHHHPGRYSAFTRMPLGGDDPEYTAATRGAAAPVIAVLSSYGLDGEQAFYAALEFWSALHGFVLLEMTGVMDDIDTDAVFTDMVLRLAAGMERRTTHGGTAST.

The disordered stretch occupies residues 1 to 24 (MAAQPQAPSAGGRPRAGKAVKSVA). An HTH tetR-type domain is found at 28–88 (KLSRESIVEG…AVRIRVIDDI (61 aa)). The H-T-H motif DNA-binding region spans 51–70 (TINALATQLGTKGPSLYNHV). Thr57 carries the post-translational modification Phosphothreonine; by PknH.

In terms of processing, phosphorylated on Thr-57 by PknH.

This is an uncharacterized protein from Mycobacterium tuberculosis (strain ATCC 25618 / H37Rv).